A 345-amino-acid polypeptide reads, in one-letter code: Probable galacturonosyltransferase-like 3 (345 aa).

The Cytoplasmic segment spans residues 1 to 7; sequence MSSLRLR. The chain crosses the membrane as a helical; Signal-anchor for type II membrane protein span at residues 8 to 28; sequence LCLLLLLPITISCVTVTLTDL. Topologically, residues 29-345 are lumenal; sequence PAFREAPAFR…FRYSPLISDS (317 aa). The N-linked (GlcNAc...) asparagine glycan is linked to N197.

It belongs to the glycosyltransferase 8 family.

The protein resides in the golgi apparatus membrane. Its pathway is glycan metabolism; pectin biosynthesis. In terms of biological role, may be involved in pectin and/or xylans biosynthesis in cell walls. The polypeptide is Probable galacturonosyltransferase-like 3 (GATL3) (Arabidopsis thaliana (Mouse-ear cress)).